The chain runs to 475 residues: GTPase Der (475 aa).

2 consecutive EngA-type G domains span residues 2-166 and 213-386; these read LRIA…NIPE and LKIA…ETVS. GTP contacts are provided by residues 8–15, 55–59, 118–121, 219–226, 266–270, and 331–334; these read GRPNVGKS, DTGGV, NKAD, DTAGL, and NKWD. One can recognise a KH-like domain in the interval 387–471; that stretch reads RKVPTPVVNK…PFDLEIKEKA (85 aa).

This sequence belongs to the TRAFAC class TrmE-Era-EngA-EngB-Septin-like GTPase superfamily. EngA (Der) GTPase family. Associates with the 50S ribosomal subunit.

Its function is as follows. GTPase that plays an essential role in the late steps of ribosome biogenesis. This chain is GTPase Der, found in Chlamydia felis (strain Fe/C-56) (Chlamydophila felis).